We begin with the raw amino-acid sequence, 75 residues long: Sec-independent protein translocase protein TatA (75 aa).

A helical transmembrane segment spans residues 1 to 21; that stretch reads MGSFSIWHWLIVLVIIALVFG. Residues 45-75 are disordered; sequence DASADKPADQVTQQRVSDDTIDVQAKEKSNS.

It belongs to the TatA/E family. In terms of assembly, the Tat system comprises two distinct complexes: a TatABC complex, containing multiple copies of TatA, TatB and TatC subunits, and a separate TatA complex, containing only TatA subunits. Substrates initially bind to the TatABC complex, which probably triggers association of the separate TatA complex to form the active translocon.

It is found in the cell inner membrane. Its function is as follows. Part of the twin-arginine translocation (Tat) system that transports large folded proteins containing a characteristic twin-arginine motif in their signal peptide across membranes. TatA could form the protein-conducting channel of the Tat system. The polypeptide is Sec-independent protein translocase protein TatA (Bordetella bronchiseptica (strain ATCC BAA-588 / NCTC 13252 / RB50) (Alcaligenes bronchisepticus)).